A 77-amino-acid chain; its full sequence is Large ribosomal subunit protein eL20 (77 aa).

Belongs to the eukaryotic ribosomal protein eL20 family. As to quaternary structure, part of the 50S ribosomal subunit. Binds 23S rRNA.

The protein is Large ribosomal subunit protein eL20 of Pyrococcus horikoshii (strain ATCC 700860 / DSM 12428 / JCM 9974 / NBRC 100139 / OT-3).